Consider the following 173-residue polypeptide: Large ribosomal subunit protein uL10 (173 aa).

This sequence belongs to the universal ribosomal protein uL10 family. In terms of assembly, part of the ribosomal stalk of the 50S ribosomal subunit. The N-terminus interacts with L11 and the large rRNA to form the base of the stalk. The C-terminus forms an elongated spine to which L12 dimers bind in a sequential fashion forming a multimeric L10(L12)X complex.

Forms part of the ribosomal stalk, playing a central role in the interaction of the ribosome with GTP-bound translation factors. The polypeptide is Large ribosomal subunit protein uL10 (Chlorobaculum parvum (strain DSM 263 / NCIMB 8327) (Chlorobium vibrioforme subsp. thiosulfatophilum)).